A 1496-amino-acid chain; its full sequence is DNA-directed RNA polymerase subunit beta' (1496 aa).

4 residues coordinate Zn(2+): Cys70, Cys72, Cys85, and Cys88. Mg(2+) is bound by residues Asp461, Asp463, and Asp465. Residues Cys908, Cys982, Cys989, and Cys992 each coordinate Zn(2+). Positions 1467–1496 (DKDMQVEGESEVPAIPPVAEGSAPEAPPAE) are disordered.

The protein belongs to the RNA polymerase beta' chain family. As to quaternary structure, the RNAP catalytic core consists of 2 alpha, 1 beta, 1 beta' and 1 omega subunit. When a sigma factor is associated with the core the holoenzyme is formed, which can initiate transcription. Requires Mg(2+) as cofactor. Zn(2+) serves as cofactor.

It carries out the reaction RNA(n) + a ribonucleoside 5'-triphosphate = RNA(n+1) + diphosphate. Its function is as follows. DNA-dependent RNA polymerase catalyzes the transcription of DNA into RNA using the four ribonucleoside triphosphates as substrates. This is DNA-directed RNA polymerase subunit beta' from Paramagnetospirillum magneticum (strain ATCC 700264 / AMB-1) (Magnetospirillum magneticum).